The sequence spans 149 residues: Large ribosomal subunit protein uL13 (149 aa).

Belongs to the universal ribosomal protein uL13 family. Part of the 50S ribosomal subunit.

Its function is as follows. This protein is one of the early assembly proteins of the 50S ribosomal subunit, although it is not seen to bind rRNA by itself. It is important during the early stages of 50S assembly. This Chlorobium chlorochromatii (strain CaD3) protein is Large ribosomal subunit protein uL13.